Reading from the N-terminus, the 340-residue chain is MLDPRARTLLKTLIERYIADGQPVGSRTLSRYSGLELSPATIRNVMSDLEELGLVSSPHTSAGRVPTPRGYRLFVDTMLTVEAPIDAEAVARQVQNTLQAGEPQQRVVAAAASVLSNLSQFAGVVLTPRRSHVFKQIEFMRLSDKRILLIIVTPEGDVQNRMLATPRDYTPSQLTEASNYINAHFAGLSFDEVRRRLRDEIDQLRGDMTTLMHAAVTASTEVPDTEDTVLISGERNLLEVADLSSDMARLRKLFDVFDQKTGLLQLLDVSSHAQGVQIFIGGESTLVPIEEMSVVTAPYEVNGKIVGTLGVIGPTRMAYNRVIPIVDITARLLSLALSQQ.

Belongs to the HrcA family.

Its function is as follows. Negative regulator of class I heat shock genes (grpE-dnaK-dnaJ and groELS operons). Prevents heat-shock induction of these operons. The protein is Heat-inducible transcription repressor HrcA of Burkholderia vietnamiensis (strain G4 / LMG 22486) (Burkholderia cepacia (strain R1808)).